The primary structure comprises 249 residues: MEYSDQALILAVKRFREIDAWVRLLSPTRGVYTAFAFGGLKSRRRFLGCLDPLNHVQFKVRRSGYRGYHCLAEGKLLDAPRQLRSHPQRLGMAVNCLKFFEAAPVAPGSFAQAYGLMRAMLSTLDAADEPSPLFPLLFRARMTFLHGMLPACGQCAVCGQPLGHDGAVCHVEEGRVACPDCRAAASGGVHARLGGEALALLASAVEQGPEQWAACRPHPAAGREFSRAVDLLVRYHMGLAWEQGGFVRA.

This sequence belongs to the RecO family.

Involved in DNA repair and RecF pathway recombination. The chain is DNA repair protein RecO from Solidesulfovibrio magneticus (strain ATCC 700980 / DSM 13731 / RS-1) (Desulfovibrio magneticus).